Here is a 1589-residue protein sequence, read N- to C-terminus: Polyhomeotic-proximal chromatin protein (1589 aa).

A compositionally biased stretch (basic and acidic residues) spans 1–15; the sequence is MDRRALKFMQKRADT. Disordered regions lie at residues 1 to 85, 107 to 174, 252 to 290, 1112 to 1244, and 1260 to 1294; these read MDRR…GGKQ, KYDV…NCNS, LQQQ…STAI, LSTA…STTT, and AVST…NGSK. Composition is skewed to low complexity over residues 18–28, 60–80, and 119–139; these read DTTTPVSTTAS, NHNN…QQQQ, and AQQQ…VTPT. The span at 154 to 174 shows a compositional bias: polar residues; sequence HTPSTPNRPSAPSTPNTNCNS. Residues 260–271 show a composition bias toward gly residues; it reads NGGGAASAGAGG. Residues 272–285 show a composition bias toward low complexity; sequence AASPANSQQSQQQQ. S1145 bears the Phosphoserine mark. The residue at position 1148 (T1148) is a Phosphothreonine. Low complexity predominate over residues 1157-1180; it reads TTPKSSTPATVSASVEASSSTGEA. Over residues 1189-1221 the composition is skewed to polar residues; it reads RSSTPSKGATTPTSKQSNAAVQPPSSTTPNSVS. 2 stretches are compositionally biased toward low complexity: residues 1230–1244 and 1260–1290; these read TCGS…STTT and AVST…SSIS. An FCS-type zinc finger spans residues 1356–1389; sequence SAPGSDMVACEQCGKMEHKAKLKRKRYCSPGCSR. Zn(2+)-binding residues include C1365, C1368, C1383, and C1387. The SAM domain maps to 1513–1577; that stretch reads WSVDDVSNFI…VAKVESIKEV (65 aa).

In terms of assembly, component of PRC1 complex, which contains many PcG proteins like Pc, ph, Scm, Psc, Sce and also chromatin-remodeling proteins such as histone deacetylases. This complex is distinct from the Esc/E(z) complex, at least composed of esc, E(z), Su(z)12, HDAC1/Rpd3 and Caf1-55. The 2 complexes however cooperate and interact together during the first 3 hours of development to establish PcG silencing. Interacts with the SAM domain of Scm via its SAM domain in vitro. Interacts with Trl in vivo and with corto in vitro. As to expression, salivary glands.

The protein localises to the nucleus. In terms of biological role, polycomb group (PcG) protein. PcG proteins act by forming multiprotein complexes, which are required to maintain the transcriptionally repressive state of homeotic genes throughout development. PcG proteins are not required to initiate repression, but to maintain it during later stages of development. Component of the PcG multiprotein PRC1 complex, a complex that acts via chromatin remodeling and modification of histones; it mediates monoubiquitination of histone H2A 'Lys-118', rendering chromatin heritably changed in its expressibility. Plays a role in regulating the expression of other pair-rule genes such as eve, ftz, and H. In Drosophila melanogaster (Fruit fly), this protein is Polyhomeotic-proximal chromatin protein (ph-p).